We begin with the raw amino-acid sequence, 282 residues long: tRNA uridine(34) hydroxylase (282 aa).

Residues 128-222 (DGRPVVMLDT…YFEEVGGSHY (95 aa)) enclose the Rhodanese domain. Cys182 acts as the Cysteine persulfide intermediate in catalysis.

It belongs to the TrhO family.

It carries out the reaction uridine(34) in tRNA + AH2 + O2 = 5-hydroxyuridine(34) in tRNA + A + H2O. Functionally, catalyzes oxygen-dependent 5-hydroxyuridine (ho5U) modification at position 34 in tRNAs. The sequence is that of tRNA uridine(34) hydroxylase from Cupriavidus metallidurans (strain ATCC 43123 / DSM 2839 / NBRC 102507 / CH34) (Ralstonia metallidurans).